Reading from the N-terminus, the 178-residue chain is ATP-dependent protease subunit HslV (178 aa).

Residue Thr7 is part of the active site. 3 residues coordinate Na(+): Gly162, Cys165, and Thr168.

The protein belongs to the peptidase T1B family. HslV subfamily. A double ring-shaped homohexamer of HslV is capped on each side by a ring-shaped HslU homohexamer. The assembly of the HslU/HslV complex is dependent on binding of ATP.

The protein resides in the cytoplasm. It catalyses the reaction ATP-dependent cleavage of peptide bonds with broad specificity.. Its activity is regulated as follows. Allosterically activated by HslU binding. Functionally, protease subunit of a proteasome-like degradation complex believed to be a general protein degrading machinery. This is ATP-dependent protease subunit HslV from Herminiimonas arsenicoxydans.